The sequence spans 206 residues: Holliday junction branch migration complex subunit RuvA (206 aa).

Residues 1–64 (MIGKLKGTVD…EDQIRLFGFV (64 aa)) form a domain I region. A domain II region spans residues 65–143 (TEAEREWFRL…AFTAADPGLA (79 aa)). The interval 144-154 (RLAADVEATEA) is flexible linker. Residues 154-206 (AAGGALADAVSALVNLGYGQAQAHTAIAAAGRKAGEDATTETLIRLGLKELAK) form a domain III region.

Belongs to the RuvA family. As to quaternary structure, homotetramer. Forms an RuvA(8)-RuvB(12)-Holliday junction (HJ) complex. HJ DNA is sandwiched between 2 RuvA tetramers; dsDNA enters through RuvA and exits via RuvB. An RuvB hexamer assembles on each DNA strand where it exits the tetramer. Each RuvB hexamer is contacted by two RuvA subunits (via domain III) on 2 adjacent RuvB subunits; this complex drives branch migration. In the full resolvosome a probable DNA-RuvA(4)-RuvB(12)-RuvC(2) complex forms which resolves the HJ.

The protein resides in the cytoplasm. The RuvA-RuvB-RuvC complex processes Holliday junction (HJ) DNA during genetic recombination and DNA repair, while the RuvA-RuvB complex plays an important role in the rescue of blocked DNA replication forks via replication fork reversal (RFR). RuvA specifically binds to HJ cruciform DNA, conferring on it an open structure. The RuvB hexamer acts as an ATP-dependent pump, pulling dsDNA into and through the RuvAB complex. HJ branch migration allows RuvC to scan DNA until it finds its consensus sequence, where it cleaves and resolves the cruciform DNA. In Azorhizobium caulinodans (strain ATCC 43989 / DSM 5975 / JCM 20966 / LMG 6465 / NBRC 14845 / NCIMB 13405 / ORS 571), this protein is Holliday junction branch migration complex subunit RuvA.